The sequence spans 1771 residues: Atrochrysone carboxylic acid synthase (1771 aa).

The interval 38–269 is N-terminal acylcarrier protein transacylase domain (SAT); sequence HLHSKDRRHH…SLPVFGGLCH (232 aa). The region spanning 402–836 is the Ketosynthase family 3 (KS3) domain; it reads QSKIAIVGMS…GGNTSVVLEE (435 aa). Active-site for beta-ketoacyl synthase activity residues include Cys-575, His-711, and His-754. The interval 937–1257 is malonyl-CoA:ACP transacylase (MAT) domain; it reads FAFTGQGASY…LSSLHCAGVE (321 aa). The interval 1322–1641 is product template (PT) domain; it reads TSTVQKIVEE…RLLLNRFFSP (320 aa). Residues 1326–1461 form an N-terminal hotdog fold region; sequence QKIVEESFDG…AKIYYCDASE (136 aa). The PKS/mFAS DH domain occupies 1326-1636; the sequence is QKIVEESFDG…FRRYPRLLLN (311 aa). The Proton acceptor; for dehydratase activity role is filled by His-1358. The interval 1488–1636 is C-terminal hotdog fold; sequence IANRFSGRMA…FRRYPRLLLN (149 aa). Asp-1547 (proton donor; for dehydratase activity) is an active-site residue. The segment covering 1668 to 1681 has biased composition (low complexity); sequence AATSTTSTTSTAST. A disordered region spans residues 1668–1695; sequence AATSTTSTTSTASTGQPPKVDETSPVDS. The 78-residue stretch at 1693–1770 folds into the Carrier domain; sequence VDSNSTAARA…DLKSWLLEYY (78 aa). Ser-1730 is subject to O-(pantetheine 4'-phosphoryl)serine.

It carries out the reaction holo-[ACP] + 8 malonyl-CoA + 8 H(+) = atrochrysone carboxyl-[ACP] + 8 CO2 + 8 CoA + 2 H2O. It participates in secondary metabolite biosynthesis. Non-reducing polyketide synthase; part of the gene cluster that mediates the biosynthesis of geodin, an intermediate in the biosynthesis of other natural products. The pathway begins with the synthesis of atrochrysone thioester by the polyketide synthase (PKS) gedC. The atrochrysone carboxyl ACP thioesterase gedB then breaks the thioester bond and releases the atrochrysone carboxylic acid from gedC. The atrochrysone carboxylic acid is then converted to atrochrysone which is further transformed into emodinanthrone. The next step is performed by the emodinanthrone oxygenase gedH that catalyzes the oxidation of emodinanthrone to emodin. Emodin O-methyltransferase encoded probably by gedA then catalyzes methylation of the 8-hydroxy group of emodin to form questin. Ring cleavage of questin by questin oxidase gedK leads to desmethylsulochrin via several intermediates including questin epoxide. Another methylation step probably catalyzed by methyltransferase gedG leads to the formation of sulochrin which is further converted to dihydrogeodin by the sulochrin halogenase gedL. Finally, the dihydrogeodin oxidase gedJ catalyzes the stereospecific phenol oxidative coupling reaction converting dihydrogeodin to geodin. The sequence is that of Atrochrysone carboxylic acid synthase from Aspergillus terreus (strain NIH 2624 / FGSC A1156).